We begin with the raw amino-acid sequence, 371 residues long: MLLLPLSVLLLLTQPWRSLGAEMTTFSQKILANACTLVMCSPLESGLPGHDGQDGRECPHGEKGDPGSPGPAGRAGRPGWVGPIGPKGDNGFVGEPGPKGDTGPRGPPGMPGPAGREGPSGKQGSMGPPGTPGPKGETGPKGGVGAPGIQGFPGPSGLKGEKGAPGETGAPGRAGVTGPSGAIGPQGPSGARGPPGLKGDRGDPGETGAKGESGLAEVNALKQRVTILDGHLRRFQNAFSQYKKAVLFPDGQAVGEKIFKTAGAVKSYSDAEQLCREAKGQLASPRSSAENEAVTQMVRAQEKNAYLSMNDISTEGRFTYPTGEILVYSNWADGEPNNSDEGQPENCVEIFPDGKWNDVPCSKQLLVICEF.

Positions 1-20 (MLLLPLSVLLLLTQPWRSLG) are cleaved as a signal peptide. Positions 46-216 (GLPGHDGQDG…TGAKGESGLA (171 aa)) constitute a Collagen-like domain. The disordered stretch occupies residues 47–215 (LPGHDGQDGR…ETGAKGESGL (169 aa)). Over residues 51-65 (DGQDGRECPHGEKGD) the composition is skewed to basic and acidic residues. At K63 the chain carries 5-hydroxylysine. Low complexity predominate over residues 71 to 83 (PAGRAGRPGWVGP). At P78 the chain carries 4-hydroxyproline. K87 bears the 5-hydroxylysine mark. At P96 the chain carries 4-hydroxyproline. A 5-hydroxylysine modification is found at K99. Residues P108, P111, P129, and P132 each carry the 4-hydroxyproline modification. 5-hydroxylysine is present on residues K135 and K141. A compositionally biased stretch (gly residues) spans 139-148 (GPKGGVGAPG). 4-hydroxyproline occurs at positions 147 and 153. 2 positions are modified to 5-hydroxylysine: K159 and K162. A 4-hydroxyproline mark is found at P171 and P195. A 5-hydroxylysine modification is found at K198. Residues 201 to 203 (RGD) carry the Cell attachment site motif. The C-type lectin domain occupies 273–371 (QLCREAKGQL…SKQLLVICEF (99 aa)). 2 disulfides stabilise this stretch: C275-C369 and C347-C361. N-linked (GlcNAc...) asparagine glycosylation is present at N337.

It belongs to the SFTPD family. In terms of assembly, oligomeric complex of 4 set of homotrimers. In terms of processing, the hydroxylysines may be O-glycosylated.

Calcium-dependent lectin-like protein which binds to a yeast cell wall extract and immune complexes through the complement component (C3bi). It is capable of binding non-reducing terminal N-acetylglucosamine, mannose, and fucose residues. This Bos taurus (Bovine) protein is Conglutinin (CGN1).